Consider the following 277-residue polypeptide: tRNA (guanine-N(7)-)-methyltransferase (277 aa).

The segment at 1–37 is disordered; that stretch reads MAGTETGDAAGTEAPQPQKRYYRQRAHSNPMADHTLR. Position 28 is a phosphoserine (Ser-28). The S-adenosyl-L-methionine site is built by Gly-85, Glu-108, Arg-110, Asn-141, Ala-142, and Leu-161. Asp-164 is a catalytic residue. The tract at residues 165–173 is alphaC helix; it reads PHFKRTKHK. Residues Thr-239 and Glu-241 each coordinate S-adenosyl-L-methionine. Residues 239–247 form an alpha6 helix region; it reads TEEGKKVLR.

It belongs to the class I-like SAM-binding methyltransferase superfamily. TrmB family. In terms of assembly, catalytic component of the METTL1-WDR4 complex, composed of METTL1 and WDR4. Phosphorylation at Ser-28 by PKB/AKT1 inactivates its methyltransferase activity via a steric interference mechanism in the active site that locally disrupts the catalytic center. Phosphorylation at Ser-28 does not affect the interaction with WDR4.

The protein resides in the nucleus. The enzyme catalyses guanosine(46) in tRNA + S-adenosyl-L-methionine = N(7)-methylguanosine(46) in tRNA + S-adenosyl-L-homocysteine. It carries out the reaction a guanosine in mRNA + S-adenosyl-L-methionine = an N(7)-methylguanosine in mRNA + S-adenosyl-L-homocysteine. It catalyses the reaction a guanosine in miRNA + S-adenosyl-L-methionine = an N(7)-methylguanosine in miRNA + S-adenosyl-L-homocysteine. It participates in tRNA modification; N(7)-methylguanine-tRNA biosynthesis. In terms of biological role, catalytic component of METTL1-WDR4 methyltransferase complex that mediates the formation of N(7)-methylguanine in a subset of RNA species, such as tRNAs, mRNAs and microRNAs (miRNAs). Catalyzes the formation of N(7)-methylguanine at position 46 (m7G46) in a large subset of tRNAs that contain the 5'-RAGGU-3' motif within the variable loop. M7G46 interacts with C13-G22 in the D-loop to stabilize tRNA tertiary structure and protect tRNAs from decay. Also acts as a methyltransferase for a subset of internal N(7)-methylguanine in mRNAs. Internal N(7)-methylguanine methylation of mRNAs in response to stress promotes their relocalization to stress granules, thereby suppressing their translation. Also methylates a specific subset of miRNAs, such as let-7. N(7)-methylguanine methylation of let-7 miRNA promotes let-7 miRNA processing by disrupting an inhibitory secondary structure within the primary miRNA transcript (pri-miRNA). Acts as a regulator of embryonic stem cell self-renewal and differentiation. The polypeptide is tRNA (guanine-N(7)-)-methyltransferase (Bos taurus (Bovine)).